The chain runs to 325 residues: Tagatose 1,6-diphosphate aldolase 1 (325 aa).

Belongs to the aldolase LacD family.

It carries out the reaction D-tagatofuranose 1,6-bisphosphate = D-glyceraldehyde 3-phosphate + dihydroxyacetone phosphate. It participates in carbohydrate metabolism; D-tagatose 6-phosphate degradation; D-glyceraldehyde 3-phosphate and glycerone phosphate from D-tagatose 6-phosphate: step 2/2. The chain is Tagatose 1,6-diphosphate aldolase 1 (lacD1) from Streptococcus pyogenes serotype M3 (strain ATCC BAA-595 / MGAS315).